Here is a 135-residue protein sequence, read N- to C-terminus: Early nodulin-5 (135 aa).

An N-terminal signal peptide occupies residues methionine 1 to serine 23.

Invasion zone and early symbiotic zone.

Functionally, involved in the infection process during the plant-rhizobium interaction. This chain is Early nodulin-5 (ENOD5), found in Pisum sativum (Garden pea).